The sequence spans 510 residues: MIWHVQNENFILDSTRILMKAFHLLLFHGSFIFPECILIFGLILLLMIDSTSDQKDRPWFYFISSTSLVMSITALLFRWKEEPIISFSGNFQTNNFNEIFQFLILLCSTLCIPLSVEYIECTEMAITEFLLFVLTATLGGMFLCGANDLITIFVAPECFSLCSYLLSGYTKRDVRSNEATTKYLLMGGASSSILVHGFSWLYGSSGGEIELQEIVNGLINTQMYNSPGISIALISTTVGIGFKLSPAPFHQWTPDVYEGSPTPVVAFLSVTSKVAASASATRIFDIPFYFSSNEWHLLLEILAILSMILGNLIAITQTSMKRMLAYSSIGQIGYVIIGIIVGDSNDGYASMITYMLFYISMNLGTFARIVSFGLRTGTDNIRDYAGLYTKDPFLALSSALCLLSLGGLPPLAGFFGKLYLFWCGWQAGLYFLVSIGLLTSVVSIYYYLKIIKLLMTGRNQEITPHVRNYRRSPLRSNNSIEWSMTVCVIASTIPGISMNPILAIAQDTLF.

Transmembrane regions (helical) follow at residues 24 to 44 (LLLF…GLIL), 59 to 79 (WFYF…LFRW), 99 to 119 (IFQF…VEYI), 124 to 144 (MAIT…MFLC), 149 to 169 (LITI…LSGY), 183 to 203 (YLLM…WLYG), 295 to 315 (WHLL…LIAI), 323 to 343 (MLAY…IVGD), 347 to 367 (GYAS…GTFA), 395 to 415 (ALSS…AGFF), and 418 to 438 (LYLF…IGLL).

This sequence belongs to the complex I subunit 2 family. In terms of assembly, NDH is composed of at least 16 different subunits, 5 of which are encoded in the nucleus.

Its subcellular location is the plastid. It is found in the chloroplast thylakoid membrane. The enzyme catalyses a plastoquinone + NADH + (n+1) H(+)(in) = a plastoquinol + NAD(+) + n H(+)(out). It catalyses the reaction a plastoquinone + NADPH + (n+1) H(+)(in) = a plastoquinol + NADP(+) + n H(+)(out). Its function is as follows. NDH shuttles electrons from NAD(P)H:plastoquinone, via FMN and iron-sulfur (Fe-S) centers, to quinones in the photosynthetic chain and possibly in a chloroplast respiratory chain. The immediate electron acceptor for the enzyme in this species is believed to be plastoquinone. Couples the redox reaction to proton translocation, and thus conserves the redox energy in a proton gradient. The protein is NAD(P)H-quinone oxidoreductase subunit 2, chloroplastic of Asparagus officinalis (Garden asparagus).